Reading from the N-terminus, the 82-residue chain is Large ribosomal subunit protein bL31 (82 aa).

This sequence belongs to the bacterial ribosomal protein bL31 family. Type A subfamily. In terms of assembly, part of the 50S ribosomal subunit.

In terms of biological role, binds the 23S rRNA. The polypeptide is Large ribosomal subunit protein bL31 (Rippkaea orientalis (strain PCC 8801 / RF-1) (Cyanothece sp. (strain PCC 8801))).